The chain runs to 357 residues: P2Y purinoceptor 8 (357 aa).

The Extracellular segment spans residues 1-26 (MVKNGSHLDAETLAMLQNKAISITLP). Asn4 carries an N-linked (GlcNAc...) asparagine glycan. Residues 27 to 47 (VVYTMVAIISIPGNFFSLWVL) traverse the membrane as a helical segment. The Cytoplasmic segment spans residues 48–56 (CWHIKPKTP). Residues 57 to 77 (SVIFMINLSITDLLLACCFPF) traverse the membrane as a helical segment. Over 78–97 (QIFYHIQRNHWIFGKTLCSL) the chain is Extracellular. A disulfide bond links Cys95 and Cys174. The helical transmembrane segment at 98-118 (VTVMFYSNMYSSILTMTCISI) threads the bilayer. At 119–137 (ERYMGVVYPMKLIKWRRKR) the chain is on the cytoplasmic side. The helical transmembrane segment at 138-158 (YALGACVIMWIFLLLAFYPLE) threads the bilayer. The Extracellular portion of the chain corresponds to 159-185 (STDLTYEVKELGIITCFDVLKWEMLPN). A helical membrane pass occupies residues 186 to 206 (FAAWVAFLLTLFVVLFLIPFI). The Cytoplasmic portion of the chain corresponds to 207–236 (VTVGCYIGTIRKLIQTSSRYGNKQKTRSIY). Residues 237 to 257 (LAIIVLSVFITCFAPNNFILL) form a helical membrane-spanning segment. The Extracellular segment spans residues 258–271 (AHMIVRLFYEGSLY). The chain crosses the membrane as a helical span at residues 272-294 (PAYKLTLCLSCLNNCIDPFIYYF). Residues 295–357 (ASKEFYQKFM…ICLQRQESVF (63 aa)) lie on the Cytoplasmic side of the membrane.

The protein belongs to the G-protein coupled receptor 1 family.

It is found in the cell membrane. In terms of biological role, probable receptor for purines coupled to G-proteins. In Gallus gallus (Chicken), this protein is P2Y purinoceptor 8 (P2RY8).